The chain runs to 295 residues: Protease HtpX (295 aa).

Helical transmembrane passes span 5–25 (VILF…SMRL) and 43–63 (ALLI…LAIS). Histidine 148 contributes to the Zn(2+) binding site. Glutamate 149 is a catalytic residue. Histidine 152 is a Zn(2+) binding site. The next 2 membrane-spanning stretches (helical) occupy residues 159–179 (VTLA…ARII) and 198–218 (FFIT…LIVL). Glutamate 225 is a binding site for Zn(2+).

It belongs to the peptidase M48B family. It depends on Zn(2+) as a cofactor.

It is found in the cell inner membrane. This Nitrosococcus oceani (strain ATCC 19707 / BCRC 17464 / JCM 30415 / NCIMB 11848 / C-107) protein is Protease HtpX.